Reading from the N-terminus, the 206-residue chain is MAAHSEQIKNNFLNNPYAQQVFNIANGQVSALDAELNKYPILRQLEQQTKVPKAYGVIALGFSSVLLIFFNMFGLAQPISNLIGWALPAYLSILAIESPQTNDDKQWLTYWVVFGSLNLVESMGLRAVLYWVPMYFVFKTLFTIWLMLPATRGAEILYFHFLRPMVGNVKSRSQSSFGTSDPLAKETGFNPAGTTAPSSFAHEKTL.

Topologically, residues 1 to 52 (MAAHSEQIKNNFLNNPYAQQVFNIANGQVSALDAELNKYPILRQLEQQTKVP) are cytoplasmic. A helical membrane pass occupies residues 53 to 72 (KAYGVIALGFSSVLLIFFNM). Residues 73-74 (FG) lie on the Lumenal side of the membrane. Residues 75 to 95 (LAQPISNLIGWALPAYLSILA) traverse the membrane as a helical segment. Over 96 to 105 (IESPQTNDDK) the chain is Cytoplasmic. The helical transmembrane segment at 106–122 (QWLTYWVVFGSLNLVES) threads the bilayer. The Lumenal segment spans residues 123-126 (MGLR). The helical transmembrane segment at 127–145 (AVLYWVPMYFVFKTLFTIW) threads the bilayer. Residues 146–206 (LMLPATRGAE…PSSFAHEKTL (61 aa)) are Cytoplasmic-facing. Positions 177–206 (FGTSDPLAKETGFNPAGTTAPSSFAHEKTL) are disordered.

It belongs to the DP1 family. Oligomer.

It localises to the endoplasmic reticulum membrane. The protein localises to the golgi apparatus membrane. In terms of biological role, required to generate and maintain the structure of the tubular endoplasmic reticulum network and the vacuole. Induces high curvature in membranes and causes membrane tubule formation. Involved in membrane/vesicle trafficking. The protein is Protein YOP1 (YOP1) of Cryptococcus neoformans var. neoformans serotype D (strain B-3501A) (Filobasidiella neoformans).